Consider the following 239-residue polypeptide: Glycerol-3-phosphate acyltransferase (239 aa).

6 helical membrane passes run 6–26, 61–81, 99–119, 135–155, 159–179, and 199–219; these read AIALLIVFSLVIGYLMGSVMF, FLVGLCDALKGFLAFVFSFLI, YYLTYLSCFAATIGHIFPLYF, LAISLWWFVICLVLWLLVTLI, VSLASLVTFFILAIIILVPWL, and WYIILFFVLWYWPLTIAVFWL.

It belongs to the PlsY family. Probably interacts with PlsX.

Its subcellular location is the cell membrane. It catalyses the reaction an acyl phosphate + sn-glycerol 3-phosphate = a 1-acyl-sn-glycero-3-phosphate + phosphate. Its pathway is lipid metabolism; phospholipid metabolism. Catalyzes the transfer of an acyl group from acyl-phosphate (acyl-PO(4)) to glycerol-3-phosphate (G3P) to form lysophosphatidic acid (LPA). This enzyme utilizes acyl-phosphate as fatty acyl donor, but not acyl-CoA or acyl-ACP. The sequence is that of Glycerol-3-phosphate acyltransferase from Mycoplasma pneumoniae (strain ATCC 29342 / M129 / Subtype 1) (Mycoplasmoides pneumoniae).